Consider the following 327-residue polypeptide: Protein EMSY-LIKE 1 (327 aa).

One can recognise an ENT domain in the interval 1 to 88 (METQIHQLEQ…HATIQPFDVL (88 aa)). Positions 32–58 (ESLITELRKELRVSDDEHRELLSRVNK) form a coiled coil. 2 disordered regions span residues 206–257 (GHGS…SDDI) and 305–327 (ADTS…MPQG). The span at 214–232 (GNRRGQIHGGRGRGPRIHQ) shows a compositional bias: basic residues. Residues 281-306 (LELDKAKKMLKEHEQALIAAIARLAD) adopt a coiled-coil conformation. A Phosphoserine modification is found at serine 308. A compositionally biased stretch (basic and acidic residues) spans 318–327 (YSHDHPMPQG).

As to quaternary structure, isoform 1 interacts with EDM2 in nucleus.

The protein localises to the nucleus. Functionally, probably involved in the regulation of chromatin states. Contributes to RPP7-mediated and basal immunity, especially against Hyaloperonospora arabidopsidis isolate Hiks1. Regulates negatively EDM2-dependent floral transition. This Arabidopsis thaliana (Mouse-ear cress) protein is Protein EMSY-LIKE 1.